Here is a 317-residue protein sequence, read N- to C-terminus: uncharacterized protein (317 aa).

The 58-residue stretch at 29-86 (IDLNLLTIFEAVYVHKGIVNAAKVLNLTPSAISQSIQKLRVIFPDPLFIRKGQGVTPT) folds into the HTH lysR-type domain. Positions 46–65 (IVNAAKVLNLTPSAISQSIQ) form a DNA-binding region, H-T-H motif.

The protein belongs to the LysR transcriptional regulatory family.

This is an uncharacterized protein from Escherichia coli (strain K12).